Reading from the N-terminus, the 376-residue chain is MAKQDYYEILGVSKTAEEREIKKAYKRLAMKYHPDRNQGDKEAEAKFKEIKEAYEVLTDSQKRAAYDQYGHAAFEQGGMGGGGFGGGADFSDIFGDVFGDIFGGGRGRQRAARGADLRYNMELTLEEAVRGVTKEIRIPTLEECDVCHGSGAKPGTQPQTCPTCHGSGQVQMRQGFFAVQQTCPHCQGRGTLIKDPCNKCHGHGRVERSKTLSVKIPAGVDTGDRIRLAGEGEVGEHGAPAGDLYVQVQVKQHPIFEREGNNLYCEVPINFAMAALGGEIEVPTLDGRVKLKVPGETQTGKLFRMRGKGVKSVRGGAQGDLLCRVVVETPVGLNEKQKQLLQELQESFGGPTGEHNSPRSKSFFDGVKKFFDDLTR.

The J domain occupies 5–70; that stretch reads DYYEILGVSK…QKRAAYDQYG (66 aa). The CR-type zinc-finger motif lies at 131–209; it reads GVTKEIRIPT…CHGHGRVERS (79 aa). 8 residues coordinate Zn(2+): Cys-144, Cys-147, Cys-161, Cys-164, Cys-183, Cys-186, Cys-197, and Cys-200. CXXCXGXG motif repeat units follow at residues 144 to 151, 161 to 168, 183 to 190, and 197 to 204; these read CDVCHGSG, CPTCHGSG, CPHCQGRG, and CNKCHGHG.

This sequence belongs to the DnaJ family. In terms of assembly, homodimer. Zn(2+) serves as cofactor.

The protein resides in the cytoplasm. In terms of biological role, participates actively in the response to hyperosmotic and heat shock by preventing the aggregation of stress-denatured proteins and by disaggregating proteins, also in an autonomous, DnaK-independent fashion. Unfolded proteins bind initially to DnaJ; upon interaction with the DnaJ-bound protein, DnaK hydrolyzes its bound ATP, resulting in the formation of a stable complex. GrpE releases ADP from DnaK; ATP binding to DnaK triggers the release of the substrate protein, thus completing the reaction cycle. Several rounds of ATP-dependent interactions between DnaJ, DnaK and GrpE are required for fully efficient folding. Also involved, together with DnaK and GrpE, in the DNA replication of plasmids through activation of initiation proteins. This is Chaperone protein DnaJ from Shigella dysenteriae serotype 1 (strain Sd197).